The primary structure comprises 549 residues: Cytoplasmic trehalase (549 aa).

Substrate is bound by residues arginine 168, 175 to 176, asparagine 212, 221 to 223, 292 to 294, and glycine 324; these read WD, RSQ, and RDE. Residues aspartate 326 and glutamate 509 each act as proton donor/acceptor in the active site. Glutamate 525 is a binding site for substrate.

The protein belongs to the glycosyl hydrolase 37 family. Monomer.

It localises to the cytoplasm. It catalyses the reaction alpha,alpha-trehalose + H2O = alpha-D-glucose + beta-D-glucose. The protein operates within glycan degradation; trehalose degradation; D-glucose from alpha,alpha-trehalose: step 1/1. Its function is as follows. Hydrolyzes trehalose to glucose. Could be involved, in cells returning to low osmolarity conditions, in the utilization of the accumulated cytoplasmic trehalose, which was synthesized in response to high osmolarity. This chain is Cytoplasmic trehalase, found in Salmonella arizonae (strain ATCC BAA-731 / CDC346-86 / RSK2980).